The chain runs to 312 residues: Taste receptor type 2 member 7 (312 aa).

Residues Met-1–Leu-9 lie on the Extracellular side of the membrane. Residues Met-10–Val-30 traverse the membrane as a helical segment. Residues Asn-31 to Ser-49 are Cytoplasmic-facing. A helical membrane pass occupies residues Ser-50–Val-70. At Gln-71–Thr-101 the chain is on the extracellular side. Residues Cys-102 to Ile-122 traverse the membrane as a helical segment. At Lys-123–Lys-128 the chain is on the cytoplasmic side. A helical membrane pass occupies residues Leu-129–Thr-149. Topologically, residues Glu-150 to Asn-187 are extracellular. N-linked (GlcNAc...) asparagine glycosylation is found at Asn-151 and Asn-167. Residues Leu-188–Leu-208 form a helical membrane-spanning segment. Residues Trp-209–Lys-235 are Cytoplasmic-facing. The chain crosses the membrane as a helical span at residues Ala-236–Ser-256. The Extracellular portion of the chain corresponds to Ser-257–Ala-266. Residues Val-267–Leu-287 form a helical membrane-spanning segment. Over Gly-288–Tyr-312 the chain is Cytoplasmic.

This sequence belongs to the G-protein coupled receptor T2R family. As to expression, expressed in subsets of taste receptor cells of the tongue and palate epithelium and exclusively in gustducin-positive cells. Expressed in 15% taste bud cells in circumvallate and foliate papillae but only in 2% in fungiform papillae. Expressed in gastric and duodenal tissues.

Its subcellular location is the membrane. Its function is as follows. Gustducin-coupled receptor implicated in the perception of bitter compounds in the oral cavity and the gastrointestinal tract. Signals through PLCB2 and the calcium-regulated cation channel TRPM5. The sequence is that of Taste receptor type 2 member 7 (Tas2r7) from Mus musculus (Mouse).